Consider the following 387-residue polypeptide: Phosphoglycerate kinase (387 aa).

Substrate contacts are provided by residues 21-23, arginine 36, 59-62, arginine 113, and arginine 146; these read DLN and HLGR. Residues lysine 197, glutamate 314, and 340-343 each bind ATP; that span reads GGDT.

This sequence belongs to the phosphoglycerate kinase family. In terms of assembly, monomer.

Its subcellular location is the cytoplasm. The catalysed reaction is (2R)-3-phosphoglycerate + ATP = (2R)-3-phospho-glyceroyl phosphate + ADP. Its pathway is carbohydrate degradation; glycolysis; pyruvate from D-glyceraldehyde 3-phosphate: step 2/5. This Pseudomonas entomophila (strain L48) protein is Phosphoglycerate kinase.